Here is a 313-residue protein sequence, read N- to C-terminus: Protein-glutamine deamidase Cif (313 aa).

Catalysis depends on residues C128, H186, and Q205.

It belongs to the Cif family.

It is found in the secreted. The protein resides in the host nucleus. The catalysed reaction is L-glutaminyl-[protein] + H2O = L-glutamyl-[protein] + NH4(+). Protein-glutamine deamidase effector that inhibits the host cell cycle and other key cellular processes such as the actin network and programmed-cell death. Acts by mediating the side chain deamidation of 'Gln-40' of host NEDD8, converting it to glutamate, thereby abolishing the activity of cullin-RING-based E3 ubiquitin-protein ligase complexes (CRL complexes). Inactivation of CRL complexes prevents ubiquitination and subsequent degradation of the cyclin-dependent kinase inhibitors CDKN1A/p21 and CDKN1B/p27, leading to G1 and G2 cell cycle arrests in host cells. Deamidation of 'Gln-40' of host NEDD8 also triggers macrophage-specific programmed cell death. Also able to catalyze deamidation of 'Gln-40' of host ubiquitin in vitro; however, NEDD8 constitutes the preferred substrate in vivo. This chain is Protein-glutamine deamidase Cif, found in Photorhabdus laumondii subsp. laumondii (strain DSM 15139 / CIP 105565 / TT01) (Photorhabdus luminescens subsp. laumondii).